A 708-amino-acid polypeptide reads, in one-letter code: Ubiquitin thioesterase Zranb1 (708 aa).

A RanBP2-type 1 zinc finger spans residues Glu3–Ser33. The Zn(2+) site is built by Cys10, Cys13, Cys24, and Cys27. Residues Thr38–Arg73 form a disordered region. RanBP2-type zinc fingers lie at residues Asn84 to Thr113 and Arg149 to Asn178. The Zn(2+) site is built by Cys90, Cys93, Cys104, Cys107, Cys155, Cys158, Cys169, and Cys172. A disordered region spans residues Arg202–Ser224. The segment covering Ser209–Thr219 has biased composition (polar residues). ANK repeat units lie at residues Lys260–Asp290 and Tyr313–Ala340. The OTU domain occupies Leu432 to Met592. The active-site Nucleophile is the Cys443. His585 acts as the Proton acceptor in catalysis.

This sequence belongs to the peptidase C64 family. As to quaternary structure, interacts with TRAF6. Interacts with APC.

It localises to the cytoplasm. The protein resides in the nucleus. The catalysed reaction is Thiol-dependent hydrolysis of ester, thioester, amide, peptide and isopeptide bonds formed by the C-terminal Gly of ubiquitin (a 76-residue protein attached to proteins as an intracellular targeting signal).. Ubiquitin thioesterase, which specifically hydrolyzes 'Lys-29'-linked and 'Lys-33'-linked diubiquitin. Also cleaves 'Lys-63'-linked chains, but with 40-fold less efficiency compared to 'Lys-29'-linked ones. Positive regulator of the Wnt signaling pathway that deubiquitinates APC protein, a negative regulator of Wnt-mediated transcription. Acts as a regulator of autophagy by mediating deubiquitination of PIK3C3/VPS34, thereby promoting autophagosome maturation. Plays a role in the regulation of cell morphology and cytoskeletal organization. Required in the stress fiber dynamics and cell migration. This is Ubiquitin thioesterase Zranb1 from Mus musculus (Mouse).